The following is a 274-amino-acid chain: 2,3,4,5-tetrahydropyridine-2,6-dicarboxylate N-succinyltransferase (274 aa).

2 residues coordinate substrate: Arg105 and Asp142.

Belongs to the transferase hexapeptide repeat family. Homotrimer.

The protein localises to the cytoplasm. It carries out the reaction (S)-2,3,4,5-tetrahydrodipicolinate + succinyl-CoA + H2O = (S)-2-succinylamino-6-oxoheptanedioate + CoA. It functions in the pathway amino-acid biosynthesis; L-lysine biosynthesis via DAP pathway; LL-2,6-diaminopimelate from (S)-tetrahydrodipicolinate (succinylase route): step 1/3. The sequence is that of 2,3,4,5-tetrahydropyridine-2,6-dicarboxylate N-succinyltransferase from Methylobacillus flagellatus (strain ATCC 51484 / DSM 6875 / VKM B-1610 / KT).